The chain runs to 1947 residues: Sodium channel protein type 3 subunit alpha (1947 aa).

The Cytoplasmic portion of the chain corresponds to methionine 1–serine 128. Residues arginine 28–asparagine 60 are disordered. A compositionally biased stretch (basic and acidic residues) spans glutamate 46–alanine 57. An I repeat occupies isoleucine 110–glutamine 455. The helical transmembrane segment at leucine 129–threonine 146 threads the bilayer. Over leucine 147–aspartate 152 the chain is Extracellular. Residues tryptophan 153 to leucine 174 form a helical membrane-spanning segment. Over alanine 175–aspartate 188 the chain is Cytoplasmic. The chain crosses the membrane as a helical span at residues proline 189–phenylalanine 206. Topologically, residues valine 207–serine 213 are extracellular. Asparagine 211 carries an N-linked (GlcNAc...) asparagine glycan. The helical transmembrane segment at alanine 214–threonine 235 threads the bilayer. Residues isoleucine 236–aspartate 249 lie on the Cytoplasmic side of the membrane. Residues valine 250–phenylalanine 269 traverse the membrane as a helical segment. The Extracellular portion of the chain corresponds to methionine 270–phenylalanine 369. N-linked (GlcNAc...) asparagine glycosylation is found at asparagine 290, asparagine 296, asparagine 302, asparagine 307, and asparagine 339. Positions serine 370–glutamate 386 form an intramembrane region, pore-forming. Residues asparagine 387–glycine 397 lie on the Extracellular side of the membrane. The helical transmembrane segment at lysine 398–alanine 424 threads the bilayer. Residues methionine 425–phenylalanine 712 are Cytoplasmic-facing. A phosphoserine mark is found at serine 484, serine 485, and serine 486. Disordered stretches follow at residues serine 493 to glutamate 529 and valine 587 to valine 632. The segment covering arginine 500–arginine 509 has biased composition (basic residues). 2 stretches are compositionally biased toward basic and acidic residues: residues glutamate 510 to glutamate 529 and aspartate 596 to asparagine 622. The stretch at cysteine 693 to glycine 965 is one II repeat. Residues valine 713–methionine 730 traverse the membrane as a helical segment. Residues glutamate 731 to glutamine 738 are Extracellular-facing. A helical membrane pass occupies residues phenylalanine 739–isoleucine 763. Residues alanine 764–glutamate 773 lie on the Cytoplasmic side of the membrane. Residues glycine 774–alanine 793 form a helical membrane-spanning segment. Topologically, residues asparagine 794–glycine 797 are extracellular. The chain crosses the membrane as a helical span at residues leucine 798–tryptophan 816. At proline 817 to glycine 834 the chain is on the cytoplasmic side. The helical transmembrane segment at asparagine 835–phenylalanine 855 threads the bilayer. Residues glycine 856–phenylalanine 880 lie on the Extracellular side of the membrane. A disulfide bridge connects residues cysteine 864 and cysteine 870. The pore-forming intramembrane region spans phenylalanine 881 to isoleucine 896. Residues glutamate 897–glycine 907 lie on the Extracellular side of the membrane. A disulfide bridge connects residues cysteine 902 and cysteine 911. A helical transmembrane segment spans residues glutamine 908–leucine 934. Topologically, residues leucine 935–histidine 1157 are cytoplasmic. Residues glutamate 1070–glutamate 1113 are disordered. An III repeat occupies lysine 1140–leucine 1451. The chain crosses the membrane as a helical span at residues asparagine 1158–glutamate 1178. Residues aspartate 1179–threonine 1190 lie on the Extracellular side of the membrane. The helical transmembrane segment at methionine 1191–valine 1212 threads the bilayer. Over alanine 1213–threonine 1218 the chain is Cytoplasmic. A helical membrane pass occupies residues tyrosine 1219 to leucine 1244. At glycine 1245–lysine 1253 the chain is on the extracellular side. A helical transmembrane segment spans residues serine 1254–glycine 1272. Residues methionine 1273–proline 1285 lie on the Cytoplasmic side of the membrane. A helical transmembrane segment spans residues serine 1286–leucine 1308. Residues phenylalanine 1309–asparagine 1354 are Extracellular-facing. Cysteine 1316 and cysteine 1336 are oxidised to a cystine. Residues asparagine 1318 and asparagine 1332 are each glycosylated (N-linked (GlcNAc...) asparagine). An intramembrane region (pore-forming) is located at residues valine 1355 to tryptophan 1371. Residues methionine 1372–leucine 1394 are Extracellular-facing. The chain crosses the membrane as a helical span at residues tyrosine 1395–isoleucine 1420. Residues aspartate 1421–glutamine 1478 lie on the Cytoplasmic side of the membrane. At serine 1453 the chain carries Phosphoserine. Residues isoleucine 1460–glutamine 1758 form an IV repeat. A helical membrane pass occupies residues valine 1479–valine 1497. Over glutamate 1498–tyrosine 1505 the chain is Extracellular. The helical transmembrane segment at methionine 1506–leucine 1529 threads the bilayer. At isoleucine 1530–isoleucine 1539 the chain is on the cytoplasmic side. A helical transmembrane segment spans residues glycine 1540–phenylalanine 1557. Residues leucine 1558 to proline 1569 lie on the Extracellular side of the membrane. The helical transmembrane segment at threonine 1570–glycine 1592 threads the bilayer. At isoleucine 1593–proline 1605 the chain is on the cytoplasmic side. Residues alanine 1606–phenylalanine 1629 form a helical membrane-spanning segment. The Extracellular segment spans residues alanine 1630–methionine 1651. Positions isoleucine 1652–aspartate 1664 form an intramembrane region, pore-forming. Over glycine 1665–proline 1696 the chain is Extracellular. A helical membrane pass occupies residues serine 1697–isoleucine 1722. Residues leucine 1723–valine 1947 are Cytoplasmic-facing. The 30-residue stretch at glutamate 1852 to lysine 1881 folds into the IQ domain. The tract at residues leucine 1901–valine 1947 is disordered. A compositionally biased stretch (basic and acidic residues) spans threonine 1926–valine 1947.

Belongs to the sodium channel (TC 1.A.1.10) family. Nav1.3/SCN3A subfamily. As to quaternary structure, heterooligomer of an alpha subunit, SCN3A, and 1 to 3 regulatory beta subunits including SCN1B and SCN2B; disulfide-linked with some beta subunits like SCN2B. Interacts with NEDD4L; could regulate expression of SCN3A at the plasma membrane through ubiquitination-regulated endocytosis. Post-translationally, may be ubiquitinated by NEDD4L; which would promote its endocytosis. Phosphorylation at Ser-1453 in a highly conserved cytoplasmic loop slows inactivation of the channel and reduces peak sodium currents. Expressed in enterochromaffin cells in both colon and small bowel (at protein level). Expressed in pancreatic alpha and beta cells.

It is found in the cell membrane. Its subcellular location is the basal cell membrane. The enzyme catalyses Na(+)(in) = Na(+)(out). Pore-forming subunit of Nav1.3, a voltage-gated sodium (Nav) channel that directly mediates the depolarizing phase of action potentials in excitable membranes. Navs, also called VGSCs (voltage-gated sodium channels) or VDSCs (voltage-dependent sodium channels), operate by switching between closed and open conformations depending on the voltage difference across the membrane. In the open conformation they allow Na(+) ions to selectively pass through the pore, along their electrochemical gradient. The influx of Na+ ions provokes membrane depolarization, initiating the propagation of electrical signals throughout cells and tissues. In some secretory cell types, it also participates in cell excitability through membrane depolarization and regulates cells responsiveness to stimuli triggering secretion. For instance, it controls the release of serotonin/5-hydroxytryptamine by enterochromaffin cells and is required for both glucagon- and glucose-induced insulin secretion in pancreatic endocrine cells. This chain is Sodium channel protein type 3 subunit alpha, found in Mus musculus (Mouse).